Reading from the N-terminus, the 308-residue chain is Aspartate carbamoyltransferase catalytic subunit (308 aa).

Carbamoyl phosphate is bound by residues R49 and T50. Position 77 (K77) interacts with L-aspartate. Residues R99, H127, and Q130 each coordinate carbamoyl phosphate. L-aspartate contacts are provided by R160 and R211. 2 residues coordinate carbamoyl phosphate: A252 and P253.

This sequence belongs to the aspartate/ornithine carbamoyltransferase superfamily. ATCase family. In terms of assembly, heterododecamer (2C3:3R2) of six catalytic PyrB chains organized as two trimers (C3), and six regulatory PyrI chains organized as three dimers (R2).

The enzyme catalyses carbamoyl phosphate + L-aspartate = N-carbamoyl-L-aspartate + phosphate + H(+). It participates in pyrimidine metabolism; UMP biosynthesis via de novo pathway; (S)-dihydroorotate from bicarbonate: step 2/3. In terms of biological role, catalyzes the condensation of carbamoyl phosphate and aspartate to form carbamoyl aspartate and inorganic phosphate, the committed step in the de novo pyrimidine nucleotide biosynthesis pathway. This chain is Aspartate carbamoyltransferase catalytic subunit, found in Bacillus caldolyticus.